Consider the following 131-residue polypeptide: Small ribosomal subunit protein bS6m (131 aa).

Belongs to the bacterial ribosomal protein bS6 family. As to quaternary structure, component of the mitochondrial small ribosomal subunit (mt-SSU). Mature yeast 74S mitochondrial ribosomes consist of a small (37S) and a large (54S) subunit. The 37S small subunit contains a 15S ribosomal RNA (15S mt-rRNA) and 34 different proteins. The 54S large subunit contains a 21S rRNA (21S mt-rRNA) and 46 different proteins.

It localises to the mitochondrion. In terms of biological role, component of the mitochondrial ribosome (mitoribosome), a dedicated translation machinery responsible for the synthesis of mitochondrial genome-encoded proteins, including at least some of the essential transmembrane subunits of the mitochondrial respiratory chain. The mitoribosomes are attached to the mitochondrial inner membrane and translation products are cotranslationally integrated into the membrane. This chain is Small ribosomal subunit protein bS6m (MRP17), found in Saccharomyces cerevisiae (strain ATCC 204508 / S288c) (Baker's yeast).